Consider the following 298-residue polypeptide: HTH-type transcriptional regulator ArgP (298 aa).

Positions 4 to 60 (LDYKWIEALDAVVAQGGFERAAEELYISQSAVSQRIKQLERFLAQPVLIREQPPKPT) constitute an HTH lysR-type domain. Positions 21–40 (FERAAEELYISQSAVSQRIK) form a DNA-binding region, H-T-H motif.

This sequence belongs to the LysR transcriptional regulatory family. As to quaternary structure, homodimer.

Functionally, controls the transcription of genes involved in arginine and lysine metabolism. In Vibrio vulnificus (strain CMCP6), this protein is HTH-type transcriptional regulator ArgP.